The primary structure comprises 571 residues: DNA primase (571 aa).

Residues Cys-20–Cys-44 form a CHC2-type zinc finger. Positions Ala-229–Pro-309 constitute a Toprim domain. Residues Glu-235, Asp-280, and Asp-282 each coordinate Mg(2+).

It belongs to the DnaG primase family. In terms of assembly, monomer. Interacts with DnaB. It depends on Zn(2+) as a cofactor. The cofactor is Mg(2+).

It catalyses the reaction ssDNA + n NTP = ssDNA/pppN(pN)n-1 hybrid + (n-1) diphosphate.. RNA polymerase that catalyzes the synthesis of short RNA molecules used as primers for DNA polymerase during DNA replication. The sequence is that of DNA primase from Deinococcus radiodurans (strain ATCC 13939 / DSM 20539 / JCM 16871 / CCUG 27074 / LMG 4051 / NBRC 15346 / NCIMB 9279 / VKM B-1422 / R1).